The chain runs to 380 residues: Chaperone protein DnaJ (380 aa).

One can recognise a J domain in the interval 5-69 (DFYEVLGVGR…QKKAAYDQYG (65 aa)). The CR-type zinc-finger motif lies at 135–213 (GCSKEIRVPT…CHGQGRVEKT (79 aa)). Zn(2+)-binding residues include Cys148, Cys151, Cys165, Cys168, Cys187, Cys190, Cys201, and Cys204. CXXCXGXG motif repeat units lie at residues 148–155 (CDSCDGSG), 165–172 (CGTCHGQG), 187–194 (CPHCHGRG), and 201–208 (CNSCHGQG).

Belongs to the DnaJ family. In terms of assembly, homodimer. Zn(2+) is required as a cofactor.

The protein resides in the cytoplasm. In terms of biological role, participates actively in the response to hyperosmotic and heat shock by preventing the aggregation of stress-denatured proteins and by disaggregating proteins, also in an autonomous, DnaK-independent fashion. Unfolded proteins bind initially to DnaJ; upon interaction with the DnaJ-bound protein, DnaK hydrolyzes its bound ATP, resulting in the formation of a stable complex. GrpE releases ADP from DnaK; ATP binding to DnaK triggers the release of the substrate protein, thus completing the reaction cycle. Several rounds of ATP-dependent interactions between DnaJ, DnaK and GrpE are required for fully efficient folding. Also involved, together with DnaK and GrpE, in the DNA replication of plasmids through activation of initiation proteins. In Photobacterium profundum (strain SS9), this protein is Chaperone protein DnaJ.